The sequence spans 144 residues: Large ribosomal subunit protein uL15 (144 aa).

Residues M1–Q54 form a disordered region. Residues G22–A31 show a composition bias toward gly residues.

The protein belongs to the universal ribosomal protein uL15 family. Part of the 50S ribosomal subunit.

Binds to the 23S rRNA. This Hydrogenovibrio crunogenus (strain DSM 25203 / XCL-2) (Thiomicrospira crunogena) protein is Large ribosomal subunit protein uL15.